A 609-amino-acid polypeptide reads, in one-letter code: Adenine deaminase (609 aa).

The protein belongs to the metallo-dependent hydrolases superfamily. Adenine deaminase family. It depends on Mn(2+) as a cofactor.

The enzyme catalyses adenine + H2O + H(+) = hypoxanthine + NH4(+). In Cenarchaeum symbiosum (strain A), this protein is Adenine deaminase.